The following is a 455-amino-acid chain: Phosphoglucosamine/phosphogalactosamine mutase (455 aa).

S97 acts as the Phosphoserine intermediate in catalysis. Residues S97, D241, D243, and D245 each contribute to the Mg(2+) site. S97 bears the Phosphoserine mark.

The protein belongs to the phosphohexose mutase family. Mg(2+) is required as a cofactor. Post-translationally, activated by phosphorylation.

The enzyme catalyses alpha-D-glucosamine 1-phosphate = D-glucosamine 6-phosphate. It catalyses the reaction D-galactosamine 6-phosphate = alpha-D-galactosamine 1-phosphate. Involved in the synthesis of UDP-N-acetylglucosamine (UDP-GlcNAc) and UDP-N-acetylgalactosamine (UDP-GalNAc). Catalyzes the conversion of glucosamine-6-phosphate to glucosamine-1-phosphate and of galactosamine-6-phosphate to galactosamine-1-phosphate. The polypeptide is Phosphoglucosamine/phosphogalactosamine mutase (Sulfurisphaera tokodaii (strain DSM 16993 / JCM 10545 / NBRC 100140 / 7) (Sulfolobus tokodaii)).